The chain runs to 381 residues: 2-oxoglutarate-dependent dioxygenase FGSG_00048 (381 aa).

The protein belongs to the iron/ascorbate-dependent oxidoreductase family. Fe(2+) is required as a cofactor.

Its pathway is mycotoxin biosynthesis. Its function is as follows. 2-oxoglutarate-dependent dioxygenase; part of the gene cluster that mediates the biosynthesis of gramillins A and B, bicyclic lipopeptides that induce cell death in maize leaves but not in wheat leaves. The nonribosomal peptide synthetase GRA1 incorporates respectively a glutamic adic (Glu), a leucine (Leu), a serine (Ser), a hydroxyglutamine (HOGln), a 2-amino decanoic acid, and 2 cysteins (CysB and CysA). The biosynthesis of 2-amino decanoic acid incorporated in gramillins could be initiated by a fatty acid synthase composed of the alpha and beta subunits FGSG_00036 and FGSG_11656. The cytochrome P450 monooxygenase FGSG_15680 could hydroxylate the fatty acid chain. Subsequent oxidation to the ketone by the oxidoreductase FGSG_00048 and transamination by aminotransferase FGSG_00049 could form 2-amino-decanoic acid. On the other hand, FGSG_15680 could also be responsible for the HO-modified glutamine at the gamma-position. Whether hydroxylation occurs on the fully assembled product or on the Gln residue prior to assembly into the gramillins requires further proof. The thioredoxin FGSG_00043 could also be required for the disulfide-bond formation between CysA and CysB. The specific involvement of the remaining proteins from the cluster is more difficult to discern, but could have broader regulatory (FGSG_00040 and FGSG_11657) or enzymatic functions (FGSG_00044 and FGSG_00045). The final C-domain of GRA1 does not possess the expected sequence of a termination CT domain, often implicated in macrocyclization and release of a cyclopeptidein fungal NRPs; and the thioesterase FGSG_00047 may act in concert with the terminal C-domain of GRA1 to catalyze the formation of the macrocyclic anhydride and release of the products. The chain is 2-oxoglutarate-dependent dioxygenase FGSG_00048 from Gibberella zeae (strain ATCC MYA-4620 / CBS 123657 / FGSC 9075 / NRRL 31084 / PH-1) (Wheat head blight fungus).